A 378-amino-acid chain; its full sequence is Alginate lyase (378 aa).

The N-terminal stretch at 1 to 28 (MQTPKLIRPTLLSMAILSSMAWATGASA) is a signal peptide. Residues 67–68 (SK), 140–141 (HT), and Tyr258 contribute to the substrate site.

It belongs to the polysaccharide lyase 5 family.

Its subcellular location is the periplasm. The catalysed reaction is Eliminative cleavage of alginate to give oligosaccharides with 4-deoxy-alpha-L-erythro-hex-4-enuronosyl groups at their non-reducing ends and beta-D-mannuronate at their reducing end.. Its activity is regulated as follows. The monovalent cation sodium enhances activity but is not absolutely required. In terms of biological role, catalyzes the depolymerization of alginate by cleaving the beta-1,4 glycosidic bond between two adjacent sugar residues via a beta-elimination mechanism. Degrades deacetylated polymannuronate (polyM) alginate from P.aeruginosa more efficiently than non-deacetylated polyM and alginate from M.pyrifera. AlgL from P.syringae also degrades its own alginate, which may indicate a role in cleaving preformed alginate and/or in determining the length of the alginate polymer. May serve to degrade mislocalized alginate that is trapped in the periplasmic space. This Pseudomonas syringae pv. syringae protein is Alginate lyase.